The sequence spans 562 residues: Malate synthase (562 aa).

R177 acts as the Proton acceptor in catalysis. Residue D463 is the Proton donor of the active site. The Microbody targeting signal signature appears at 560 to 562 (SRL).

It belongs to the malate synthase family.

The protein localises to the glyoxysome. The catalysed reaction is glyoxylate + acetyl-CoA + H2O = (S)-malate + CoA + H(+). The protein operates within carbohydrate metabolism; glyoxylate cycle; (S)-malate from isocitrate: step 2/2. Functionally, does not seem to be essential for lipid utilization and gluconeogenesis in seedlings. This is Malate synthase from Arabidopsis thaliana (Mouse-ear cress).